The following is a 365-amino-acid chain: UDP-N-acetylglucosamine--N-acetylmuramyl-(pentapeptide) pyrophosphoryl-undecaprenol N-acetylglucosamine transferase (365 aa).

UDP-N-acetyl-alpha-D-glucosamine contacts are provided by residues Thr11 to Gly13, Asn124, Arg165, Ser192, Ile246, and Gln291.

Belongs to the glycosyltransferase 28 family. MurG subfamily.

The protein resides in the cell inner membrane. The enzyme catalyses di-trans,octa-cis-undecaprenyl diphospho-N-acetyl-alpha-D-muramoyl-L-alanyl-D-glutamyl-meso-2,6-diaminopimeloyl-D-alanyl-D-alanine + UDP-N-acetyl-alpha-D-glucosamine = di-trans,octa-cis-undecaprenyl diphospho-[N-acetyl-alpha-D-glucosaminyl-(1-&gt;4)]-N-acetyl-alpha-D-muramoyl-L-alanyl-D-glutamyl-meso-2,6-diaminopimeloyl-D-alanyl-D-alanine + UDP + H(+). It participates in cell wall biogenesis; peptidoglycan biosynthesis. Cell wall formation. Catalyzes the transfer of a GlcNAc subunit on undecaprenyl-pyrophosphoryl-MurNAc-pentapeptide (lipid intermediate I) to form undecaprenyl-pyrophosphoryl-MurNAc-(pentapeptide)GlcNAc (lipid intermediate II). The protein is UDP-N-acetylglucosamine--N-acetylmuramyl-(pentapeptide) pyrophosphoryl-undecaprenol N-acetylglucosamine transferase of Nitratidesulfovibrio vulgaris (strain ATCC 29579 / DSM 644 / CCUG 34227 / NCIMB 8303 / VKM B-1760 / Hildenborough) (Desulfovibrio vulgaris).